The sequence spans 446 residues: Histidine--tRNA ligase (446 aa).

This sequence belongs to the class-II aminoacyl-tRNA synthetase family. As to quaternary structure, homodimer.

It localises to the cytoplasm. The enzyme catalyses tRNA(His) + L-histidine + ATP = L-histidyl-tRNA(His) + AMP + diphosphate + H(+). The sequence is that of Histidine--tRNA ligase from Paraburkholderia phymatum (strain DSM 17167 / CIP 108236 / LMG 21445 / STM815) (Burkholderia phymatum).